We begin with the raw amino-acid sequence, 359 residues long: 3-dehydroquinate synthase (359 aa).

Residues 71-76 (DGEQYK), 105-109 (GVIGD), 129-130 (TT), Lys-142, Lys-151, and 169-172 (CLST) contribute to the NAD(+) site. Residues Glu-184, His-247, and His-264 each contribute to the Zn(2+) site.

This sequence belongs to the sugar phosphate cyclases superfamily. Dehydroquinate synthase family. Co(2+) is required as a cofactor. Requires Zn(2+) as cofactor. NAD(+) serves as cofactor.

It localises to the cytoplasm. It carries out the reaction 7-phospho-2-dehydro-3-deoxy-D-arabino-heptonate = 3-dehydroquinate + phosphate. The protein operates within metabolic intermediate biosynthesis; chorismate biosynthesis; chorismate from D-erythrose 4-phosphate and phosphoenolpyruvate: step 2/7. In terms of biological role, catalyzes the conversion of 3-deoxy-D-arabino-heptulosonate 7-phosphate (DAHP) to dehydroquinate (DHQ). In Shewanella halifaxensis (strain HAW-EB4), this protein is 3-dehydroquinate synthase.